The primary structure comprises 583 residues: Putative rhophilin-2-like protein RHPN2P1 (583 aa).

Residues 26 to 375 (PLIPLGLKET…RLTYAQHQED (350 aa)) form the BRO1 domain. The 79-residue stretch at 412-490 (RSNRFTAEEG…DEIEMKVVSL (79 aa)) folds into the PDZ domain.

The polypeptide is Putative rhophilin-2-like protein RHPN2P1 (RHPN2P1) (Homo sapiens (Human)).